We begin with the raw amino-acid sequence, 294 residues long: Probable endonuclease 4 (294 aa).

Histidine 78, histidine 118, glutamate 157, aspartate 191, histidine 194, histidine 228, aspartate 241, histidine 243, and glutamate 273 together coordinate Zn(2+).

The protein belongs to the AP endonuclease 2 family. It depends on Zn(2+) as a cofactor.

It catalyses the reaction Endonucleolytic cleavage to 5'-phosphooligonucleotide end-products.. Its function is as follows. Endonuclease IV plays a role in DNA repair. It cleaves phosphodiester bonds at apurinic or apyrimidinic (AP) sites, generating a 3'-hydroxyl group and a 5'-terminal sugar phosphate. The protein is Probable endonuclease 4 of Streptomyces coelicolor (strain ATCC BAA-471 / A3(2) / M145).